A 201-amino-acid polypeptide reads, in one-letter code: LexA repressor (201 aa).

The H-T-H motif DNA-binding region spans arginine 28–lysine 48. Active-site for autocatalytic cleavage activity residues include serine 118 and lysine 155.

Belongs to the peptidase S24 family. In terms of assembly, homodimer.

The enzyme catalyses Hydrolysis of Ala-|-Gly bond in repressor LexA.. Functionally, represses a number of genes involved in the response to DNA damage (SOS response), including recA and lexA. In the presence of single-stranded DNA, RecA interacts with LexA causing an autocatalytic cleavage which disrupts the DNA-binding part of LexA, leading to derepression of the SOS regulon and eventually DNA repair. In Saccharophagus degradans (strain 2-40 / ATCC 43961 / DSM 17024), this protein is LexA repressor.